Here is a 469-residue protein sequence, read N- to C-terminus: Argininosuccinate lyase (469 aa).

It belongs to the lyase 1 family. Argininosuccinate lyase subfamily.

It localises to the cytoplasm. The enzyme catalyses 2-(N(omega)-L-arginino)succinate = fumarate + L-arginine. The protein operates within amino-acid biosynthesis; L-arginine biosynthesis; L-arginine from L-ornithine and carbamoyl phosphate: step 3/3. The polypeptide is Argininosuccinate lyase (Burkholderia multivorans (strain ATCC 17616 / 249)).